A 350-amino-acid chain; its full sequence is Uroporphyrinogen decarboxylase (350 aa).

Residues 28-32 (RQAGR), Asp-78, Tyr-155, Ser-210, and His-325 each bind substrate.

Belongs to the uroporphyrinogen decarboxylase family. As to quaternary structure, homodimer.

The protein localises to the cytoplasm. It carries out the reaction uroporphyrinogen III + 4 H(+) = coproporphyrinogen III + 4 CO2. Its pathway is porphyrin-containing compound metabolism; protoporphyrin-IX biosynthesis; coproporphyrinogen-III from 5-aminolevulinate: step 4/4. Its function is as follows. Catalyzes the decarboxylation of four acetate groups of uroporphyrinogen-III to yield coproporphyrinogen-III. This is Uroporphyrinogen decarboxylase from Microcystis aeruginosa (strain NIES-843 / IAM M-2473).